The following is a 519-amino-acid chain: Cytochrome P450 52A12 (519 aa).

A heme-binding site is contributed by Cys-467.

The protein belongs to the cytochrome P450 family. The cofactor is heme.

It localises to the membrane. Together with an NADPH cytochrome P450 the enzyme system catalyzes the terminal hydroxylation as the first step in the assimilation of alkanes and fatty acids. The protein is Cytochrome P450 52A12 (CYP52A12) of Debaryomyces hansenii (Yeast).